We begin with the raw amino-acid sequence, 250 residues long: Small ribosomal subunit protein uS2 (250 aa).

It belongs to the universal ribosomal protein uS2 family.

The sequence is that of Small ribosomal subunit protein uS2 from Variovorax paradoxus (strain S110).